A 400-amino-acid polypeptide reads, in one-letter code: Phosphoglycerate kinase (400 aa).

Substrate-binding positions include 21-23 (DFN), R36, 59-62 (HCSR), R118, and R151. Residues K201, E323, and 353 to 356 (GGDT) each bind ATP.

Belongs to the phosphoglycerate kinase family. In terms of assembly, monomer.

It localises to the cytoplasm. It carries out the reaction (2R)-3-phosphoglycerate + ATP = (2R)-3-phospho-glyceroyl phosphate + ADP. It functions in the pathway carbohydrate degradation; glycolysis; pyruvate from D-glyceraldehyde 3-phosphate: step 2/5. The protein is Phosphoglycerate kinase of Bartonella bacilliformis (strain ATCC 35685 / KC583 / Herrer 020/F12,63).